We begin with the raw amino-acid sequence, 314 residues long: Malate dehydrogenase (314 aa).

NAD(+)-binding positions include 11–16 and D35; that span reads GSGNIG. 2 residues coordinate substrate: R84 and R90. NAD(+)-binding positions include N97 and 120–122; that span reads ITN. Substrate is bound by residues N122 and R153. The active-site Proton acceptor is the H177.

This sequence belongs to the LDH/MDH superfamily. MDH type 3 family.

It carries out the reaction (S)-malate + NAD(+) = oxaloacetate + NADH + H(+). Catalyzes the reversible oxidation of malate to oxaloacetate. The polypeptide is Malate dehydrogenase (Rickettsia conorii (strain ATCC VR-613 / Malish 7)).